A 134-amino-acid chain; its full sequence is Phosphomevalonate dehydratase small subunit (134 aa).

Ser62 serves as the catalytic Proton acceptor.

This sequence belongs to the AcnX type II small subunit family. Heterodimer composed of a large subunit (PMDh-L) and a small subunit (PMDh-S).

The enzyme catalyses (R)-5-phosphomevalonate = (2E)-3-methyl-5-phosphooxypent-2-enoate + H2O. The protein operates within isoprenoid biosynthesis; isopentenyl diphosphate biosynthesis via mevalonate pathway. Component of a hydro-lyase that catalyzes the dehydration of mevalonate 5-phosphate (MVA5P) to form trans-anhydromevalonate 5-phosphate (tAHMP). Involved in the archaeal mevalonate (MVA) pathway, which provides fundamental precursors for isoprenoid biosynthesis, such as isopentenyl diphosphate (IPP) and dimethylallyl diphosphate (DMAPP). The protein is Phosphomevalonate dehydratase small subunit of Pyrococcus horikoshii (strain ATCC 700860 / DSM 12428 / JCM 9974 / NBRC 100139 / OT-3).